We begin with the raw amino-acid sequence, 175 residues long: CASP-like protein 2C1 (175 aa).

The Cytoplasmic portion of the chain corresponds to 1–7 (MVRLRET). The chain crosses the membrane as a helical span at residues 8–28 (EVILRLCIVFFILLSSCLIGL). Over 29–51 (DSQTKEIAYIHKKVSFRYLLALE) the chain is Extracellular. A helical membrane pass occupies residues 52-72 (AELYINVVVAAYNLVQIGLGW). Residues 73-91 (YNVEQKTSNPKWFSYLLDQ) are Cytoplasmic-facing. Residues 92–112 (TAAYVVFAGTSAAAQHSLLVV) form a helical membrane-spanning segment. Topologically, residues 113–136 (TGSRELQWMKWCYKFTRFCFQMGS) are extracellular. A helical membrane pass occupies residues 137 to 157 (AIILNYIAAALMVLLSSISAF). Residues 158-175 (NLFRLYSPKRFFSFKSSS) are Cytoplasmic-facing.

Belongs to the Casparian strip membrane proteins (CASP) family. As to quaternary structure, homodimer and heterodimers.

The protein localises to the cell membrane. The sequence is that of CASP-like protein 2C1 from Arabidopsis lyrata subsp. lyrata (Lyre-leaved rock-cress).